Here is a 258-residue protein sequence, read N- to C-terminus: Ribosomal RNA small subunit methyltransferase J (258 aa).

S-adenosyl-L-methionine-binding positions include 111 to 112, 127 to 128, and Asp179; these read RD and ER.

It belongs to the methyltransferase superfamily. RsmJ family.

The protein localises to the cytoplasm. The enzyme catalyses guanosine(1516) in 16S rRNA + S-adenosyl-L-methionine = N(2)-methylguanosine(1516) in 16S rRNA + S-adenosyl-L-homocysteine + H(+). Its function is as follows. Specifically methylates the guanosine in position 1516 of 16S rRNA. This chain is Ribosomal RNA small subunit methyltransferase J, found in Alteromonas mediterranea (strain DSM 17117 / CIP 110805 / LMG 28347 / Deep ecotype).